Consider the following 216-residue polypeptide: Glycerol-3-phosphate acyltransferase 3 (216 aa).

5 helical membrane passes run 6–26 (LLLV…YLVS), 58–78 (LVAA…GLVI), 92–112 (ILFA…WPVF), 125–145 (FGGM…VLII), and 158–178 (ITGV…SGFP).

It belongs to the PlsY family. Probably interacts with PlsX.

The protein localises to the cell membrane. The catalysed reaction is an acyl phosphate + sn-glycerol 3-phosphate = a 1-acyl-sn-glycero-3-phosphate + phosphate. It participates in lipid metabolism; phospholipid metabolism. Its function is as follows. Catalyzes the transfer of an acyl group from acyl-phosphate (acyl-PO(4)) to glycerol-3-phosphate (G3P) to form lysophosphatidic acid (LPA). This enzyme utilizes acyl-phosphate as fatty acyl donor, but not acyl-CoA or acyl-ACP. The chain is Glycerol-3-phosphate acyltransferase 3 from Dehalococcoides mccartyi (strain ATCC BAA-2266 / KCTC 15142 / 195) (Dehalococcoides ethenogenes (strain 195)).